Reading from the N-terminus, the 199-residue chain is Putative lectin L633 (199 aa).

The signal sequence occupies residues Met1–Asn25. Residues Cys35–Asp48 are compositionally biased toward polar residues. The segment at Cys35–Asn74 is disordered. A compositionally biased stretch (low complexity) spans Gln49–Pro73. In terms of domain architecture, Bulb-type lectin spans Glu84 to Arg195. N-linked (GlcNAc...) asparagine; by host glycosylation is present at Asn121.

It localises to the secreted. The protein is Putative lectin L633 of Acanthamoeba polyphaga (Amoeba).